The chain runs to 300 residues: tRNA dimethylallyltransferase (300 aa).

11–18 (GPTAVGKS) lines the ATP pocket. 13 to 18 (TAVGKS) provides a ligand contact to substrate. The segment at 35 to 38 (DSVQ) is interaction with substrate tRNA.

The protein belongs to the IPP transferase family. Monomer. Mg(2+) is required as a cofactor.

The enzyme catalyses adenosine(37) in tRNA + dimethylallyl diphosphate = N(6)-dimethylallyladenosine(37) in tRNA + diphosphate. Functionally, catalyzes the transfer of a dimethylallyl group onto the adenine at position 37 in tRNAs that read codons beginning with uridine, leading to the formation of N6-(dimethylallyl)adenosine (i(6)A). This chain is tRNA dimethylallyltransferase, found in Borrelia hermsii (strain HS1 / DAH).